The primary structure comprises 331 residues: Probable protein phosphatase 2C 72 (331 aa).

In terms of domain architecture, PPM-type phosphatase spans 43 to 324 (LGSVCSIQGT…DDITVICLFL (282 aa)). Residues Asp78, Gly79, Asp268, and Asp315 each contribute to the Mn(2+) site.

It belongs to the PP2C family. The cofactor is Mg(2+). Mn(2+) serves as cofactor.

The catalysed reaction is O-phospho-L-seryl-[protein] + H2O = L-seryl-[protein] + phosphate. It catalyses the reaction O-phospho-L-threonyl-[protein] + H2O = L-threonyl-[protein] + phosphate. The chain is Probable protein phosphatase 2C 72 from Arabidopsis thaliana (Mouse-ear cress).